We begin with the raw amino-acid sequence, 362 residues long: Prostaglandin F2-alpha receptor (362 aa).

The Extracellular segment spans residues 1–31 (MSTNNSVQPVSPASELLSNTTCQLEEDLSIS). Residues Asn-4 and Asn-19 are each glycosylated (N-linked (GlcNAc...) asparagine). Residues 32–54 (FSIIFMTVGILSNSLAIAILMKA) traverse the membrane as a helical segment. Topologically, residues 55–69 (YQRFRQKYKSSFLLL) are cytoplasmic. Residues 70-90 (ASALVITDFFGHLINGTIAVF) form a helical membrane-spanning segment. The Extracellular segment spans residues 91–109 (VYASDKDWIYFDKSNILCS). A disulfide bridge connects residues Cys-108 and Cys-186. Residues 110–131 (IFGICMVFSGLCPLFLGSLMAI) form a helical membrane-spanning segment. Over 132–152 (ERCIGVTKPIFHSTKITTKHV) the chain is Cytoplasmic. The chain crosses the membrane as a helical span at residues 153–175 (KMMLSGVCFFAVFVALLPILGHR). The Extracellular segment spans residues 176 to 198 (DYKIQASRTWCFYKTDQIKDWED). The helical transmembrane segment at 199-224 (RFYLLLFAFLGLLALGISFVCNAITG) threads the bilayer. Residues 225–250 (ISLLKVKFRSQQHRQGRSHHFEMVIQ) are Cytoplasmic-facing. The chain crosses the membrane as a helical span at residues 251-267 (LLGIMCVSCICWSPFLV). Over 268–285 (TMASIGMNIQDFKDSCER) the chain is Extracellular. Residues 286–307 (TLFTLRMATWNQILDPWVYILL) form a helical membrane-spanning segment. Residues 308–362 (RKAVLRNLYVCTRRCCGVHVISLHVWELSSIKNSLKVAAISDLPVTEKVTQQTST) are Cytoplasmic-facing.

This sequence belongs to the G-protein coupled receptor 1 family.

It is found in the cell membrane. In terms of biological role, receptor for prostaglandin F2-alpha (PGF2-alpha). The activity of this receptor is mediated by G proteins which activate a phosphatidylinositol-calcium second messenger system. Initiates luteolysis in the corpus luteum. The polypeptide is Prostaglandin F2-alpha receptor (PTGFR) (Ovis aries (Sheep)).